The primary structure comprises 255 residues: Probable transcriptional regulator ycf27 (255 aa).

The Response regulatory domain maps to 9–122 (KILIADDESS…ELEARIRCVL (114 aa)). D58 is subject to 4-aspartylphosphate. The H-T-H motif DNA-binding region spans 78–96 (DIPIIMLTALGDVTDRITG). The segment at residues 137-238 (SGIINIGFLK…SRGTGYLFQR (102 aa)) is a DNA-binding region (ompR/PhoB-type).

It is found in the plastid. Its subcellular location is the chloroplast. Functionally, probable promoter-specific protein mediating the interaction between DNA and RNA polymerase. The polypeptide is Probable transcriptional regulator ycf27 (ycf27) (Galdieria sulphuraria (Red alga)).